A 258-amino-acid polypeptide reads, in one-letter code: Imidazole glycerol phosphate synthase subunit HisF (258 aa).

Catalysis depends on residues Asp11 and Asp130.

It belongs to the HisA/HisF family. In terms of assembly, heterodimer of HisH and HisF.

It localises to the cytoplasm. The enzyme catalyses 5-[(5-phospho-1-deoxy-D-ribulos-1-ylimino)methylamino]-1-(5-phospho-beta-D-ribosyl)imidazole-4-carboxamide + L-glutamine = D-erythro-1-(imidazol-4-yl)glycerol 3-phosphate + 5-amino-1-(5-phospho-beta-D-ribosyl)imidazole-4-carboxamide + L-glutamate + H(+). The protein operates within amino-acid biosynthesis; L-histidine biosynthesis; L-histidine from 5-phospho-alpha-D-ribose 1-diphosphate: step 5/9. Its function is as follows. IGPS catalyzes the conversion of PRFAR and glutamine to IGP, AICAR and glutamate. The HisF subunit catalyzes the cyclization activity that produces IGP and AICAR from PRFAR using the ammonia provided by the HisH subunit. This Yersinia pseudotuberculosis serotype IB (strain PB1/+) protein is Imidazole glycerol phosphate synthase subunit HisF.